The sequence spans 152 residues: Endoribonuclease YbeY (152 aa).

Residues His-113, His-117, and His-123 each contribute to the Zn(2+) site.

Belongs to the endoribonuclease YbeY family. The cofactor is Zn(2+).

It is found in the cytoplasm. In terms of biological role, single strand-specific metallo-endoribonuclease involved in late-stage 70S ribosome quality control and in maturation of the 3' terminus of the 16S rRNA. This is Endoribonuclease YbeY from Paracidovorax citrulli (strain AAC00-1) (Acidovorax citrulli).